We begin with the raw amino-acid sequence, 174 residues long: Protein SHI RELATED SEQUENCE 3 (174 aa).

6 residues coordinate Zn(2+): C9, C12, C20, C25, C29, and C36. A DNA-binding region (zn(2)-C6 fungal-type; degenerate) is located at residues 9 to 36; it reads CEDCGNQAKKDCVYMRCRTCCKSKAFHC. A Required for homo- and heterodimerization motif is present at residues 110–113; it reads IGGH.

Belongs to the SHI protein family.

It is found in the nucleus. Transcription activator that binds DNA on 5'-ACTCTAC-3' and promotes auxin homeostasis-regulating gene expression (e.g. YUC genes), as well as genes affecting stamen development, cell expansion and timing of flowering. Synergistically with other SHI-related proteins, regulates gynoecium, stamen and leaf development in a dose-dependent manner, controlling apical-basal patterning. Promotes style and stigma formation, and influences vascular development during gynoecium development. May also have a role in the formation and/or maintenance of the shoot apical meristem (SAM). The polypeptide is Protein SHI RELATED SEQUENCE 3 (SRS3) (Arabidopsis thaliana (Mouse-ear cress)).